The following is a 128-amino-acid chain: Fruiting body differentiation protein 16 (128 aa).

A signal peptide spans 1 to 19 (MLFSHIVFVALSVFGLVQA).

Its function is as follows. Plays a role in the regulation of fruiting body development. This chain is Fruiting body differentiation protein 16, found in Flammulina velutipes (Agaricus velutipes).